The chain runs to 164 residues: UPF0251 protein MA_0157 (164 aa).

The disordered stretch occupies residues 91-124 (GDYRMPRGDGTGPAGQGPVGGGRSRGQGKGRGGR). Positions 99-115 (DGTGPAGQGPVGGGRSR) are enriched in gly residues.

It belongs to the UPF0251 family.

In Methanosarcina acetivorans (strain ATCC 35395 / DSM 2834 / JCM 12185 / C2A), this protein is UPF0251 protein MA_0157.